Consider the following 417-residue polypeptide: NADH-quinone oxidoreductase subunit D (417 aa).

This sequence belongs to the complex I 49 kDa subunit family. As to quaternary structure, NDH-1 is composed of 14 different subunits. Subunits NuoB, C, D, E, F, and G constitute the peripheral sector of the complex.

The protein localises to the cell inner membrane. The enzyme catalyses a quinone + NADH + 5 H(+)(in) = a quinol + NAD(+) + 4 H(+)(out). Functionally, NDH-1 shuttles electrons from NADH, via FMN and iron-sulfur (Fe-S) centers, to quinones in the respiratory chain. The immediate electron acceptor for the enzyme in this species is believed to be ubiquinone. Couples the redox reaction to proton translocation (for every two electrons transferred, four hydrogen ions are translocated across the cytoplasmic membrane), and thus conserves the redox energy in a proton gradient. This Methylobacillus flagellatus (strain ATCC 51484 / DSM 6875 / VKM B-1610 / KT) protein is NADH-quinone oxidoreductase subunit D.